The chain runs to 157 residues: Protein TIFY 8 (157 aa).

A Tify domain is found at 33–68 (VPGTTEQLTIFYSGSMVKFDNVPREKIRYACRLRRL). The disordered stretch occupies residues 126–147 (SIGAQRTGTPPSRRRIHARGKS). Residues 137 to 147 (SRRRIHARGKS) are compositionally biased toward basic residues.

The protein belongs to the TIFY/JAZ family. In terms of processing, ubiquitinated. Targeted for degradation by the SCF(COI1) E3 ubiquitin ligase-proteasome pathway during jasmonate signaling.

In terms of biological role, repressor of jasmonate responses. The sequence is that of Protein TIFY 8 from Oryza sativa subsp. japonica (Rice).